A 130-amino-acid chain; its full sequence is Cystatin (130 aa).

Positions 1-19 (MEWKIVVPLFAVAFTVANA) are cleaved as a signal peptide. The Secondary area of contact signature appears at 67–71 (QVVSG). 2 disulfide bridges follow: Cys-85/Cys-94 and Cys-108/Cys-128.

This sequence belongs to the cystatin family.

It is found in the secreted. Functionally, cysteine proteinase inhibitor. The protein is Cystatin of Oncorhynchus mykiss (Rainbow trout).